The following is a 150-amino-acid chain: Transcriptional repressor NrdR (150 aa).

A zinc finger lies at 3-34; the sequence is CPFCGYEDTFVIDTREIEDQKVIRRRRECPNC. Residues 49-139 enclose the ATP-cone domain; it reads IMVIKKDGRR…VYQEFSSLEE (91 aa).

It belongs to the NrdR family. Zn(2+) serves as cofactor.

Negatively regulates transcription of bacterial ribonucleotide reductase nrd genes and operons by binding to NrdR-boxes. The chain is Transcriptional repressor NrdR from Dictyoglomus turgidum (strain DSM 6724 / Z-1310).